A 498-amino-acid polypeptide reads, in one-letter code: uncharacterized protein (498 aa).

Disordered stretches follow at residues 1–48, 99–134, and 190–209; these read MSND…ARPK, NDLH…GNSK, and NSEN…TSSN. The segment covering 35 to 44 has biased composition (polar residues); that stretch reads ELSTPKQVNQ. Basic and acidic residues predominate over residues 99 to 110; that stretch reads NDLHPLDNDSTR. Over residues 111-126 the composition is skewed to polar residues; the sequence is TSKTLKNSSEVLTASK.

This is an uncharacterized protein from Schizosaccharomyces pombe (strain 972 / ATCC 24843) (Fission yeast).